A 397-amino-acid polypeptide reads, in one-letter code: MNSSILVINCGSSSLKFALIDSASHEAVMTGLAEKLGLADACITFKHNGDKQTALLSAPDHAAAMHAIIEKLQQVSLLDSVKAIGHRVVHGGEHFKQSALLDETAINEIERCIKLAPLHNPAHILGIRTAIKEFPSLPQVAVFDTSFHQTMPEKAYLYAVPMKLYRENSLRRYGMHGTSYRFVAEEAAKMLGKPANETSLVIAHLGNGASISAIRNGKCADTSMGLTPLEGLVMGTRSGDIDPSVFGYLATERGMDIQSITNMLNKESGLLGLSELSNDCRELEEAAAKGHEGAKRALEVFAYRLAKYVASMSVGAGRLDAVVFTGGIGENSSFLRAEVINQLGFLGLKLDAAANEACIRGNAGRITAADSVPALVINTNEELMIAMDTAKLAGLAN.

A Mg(2+)-binding site is contributed by N9. K16 provides a ligand contact to ATP. A substrate-binding site is contributed by R87. The active-site Proton donor/acceptor is the D144. ATP-binding positions include H204–G208, D279–R281, and G327–N331. E381 contributes to the Mg(2+) binding site.

This sequence belongs to the acetokinase family. Homodimer. Mg(2+) is required as a cofactor. It depends on Mn(2+) as a cofactor.

The protein localises to the cytoplasm. It catalyses the reaction acetate + ATP = acetyl phosphate + ADP. The protein operates within metabolic intermediate biosynthesis; acetyl-CoA biosynthesis; acetyl-CoA from acetate: step 1/2. Its function is as follows. Catalyzes the formation of acetyl phosphate from acetate and ATP. Can also catalyze the reverse reaction. This is Acetate kinase from Chromobacterium violaceum (strain ATCC 12472 / DSM 30191 / JCM 1249 / CCUG 213 / NBRC 12614 / NCIMB 9131 / NCTC 9757 / MK).